A 159-amino-acid chain; its full sequence is Cyclic pyranopterin monophosphate synthase (159 aa).

Residues 75 to 77 (LCH) and 113 to 114 (ME) each bind substrate. The active site involves Asp128.

It belongs to the MoaC family. In terms of assembly, homohexamer; trimer of dimers.

The enzyme catalyses (8S)-3',8-cyclo-7,8-dihydroguanosine 5'-triphosphate = cyclic pyranopterin phosphate + diphosphate. It functions in the pathway cofactor biosynthesis; molybdopterin biosynthesis. Its function is as follows. Catalyzes the conversion of (8S)-3',8-cyclo-7,8-dihydroguanosine 5'-triphosphate to cyclic pyranopterin monophosphate (cPMP). In Vibrio vulnificus (strain YJ016), this protein is Cyclic pyranopterin monophosphate synthase.